The sequence spans 240 residues: Dihydromonapterin reductase (240 aa).

The active-site Proton acceptor is the Tyr152.

It belongs to the short-chain dehydrogenases/reductases (SDR) family. FolM subfamily.

The catalysed reaction is (6S)-5,6,7,8-tetrahydrofolate + NADP(+) = 7,8-dihydrofolate + NADPH + H(+). It catalyses the reaction 7,8-dihydromonapterin + NADPH + H(+) = 5,6,7,8-tetrahydromonapterin + NADP(+). Functionally, catalyzes the reduction of dihydromonapterin to tetrahydromonapterin. Also has lower activity with dihydrofolate. This chain is Dihydromonapterin reductase (folM), found in Escherichia coli O1:K1 / APEC.